The chain runs to 188 residues: Cytochrome b-245 chaperone 1 homolog (188 aa).

The helical transmembrane segment at 20–42 threads the bilayer; sequence SIRSWSLLVGILSVGLAAAYYST.

It belongs to the CYBC1 family.

The protein localises to the endoplasmic reticulum membrane. Functionally, functions as a chaperone necessary for a stable expression of the CYBA and CYBB subunits of the cytochrome b-245 heterodimer. The polypeptide is Cytochrome b-245 chaperone 1 homolog (cybc1) (Xenopus laevis (African clawed frog)).